The primary structure comprises 282 residues: MRVALVVDIVRQEEKLIAKALEKFQLQYDVINVAQEPLPFNKALGRYDVAIIRPISMYRALYASAVLESAGVHTINSSDTISLCGDKILTYSKLYREGIPIPDSIIAMSSDAALKAYEQKGFPLIDKPPIGSWGRLVSLIRDIFEGKTIIEHRELMGNSALKVHIVQEYINYKSRDIRCIVIGSELLGCYARNIPSNEWRANIALGGYPSQIEVDHKLKETVLKATSIIGGEFVSIDVMEHQSKNYVINEFNDVPEFKGFMLATNIDVAEELVSYVKNNYLR.

ATP is bound by residues lysine 87, lysine 127, 131-137 (GSWGRLV), and 167-178 (QEYINYKSRDIR). The 187-residue stretch at 91–277 (YSKLYREGIP…VAEELVSYVK (187 aa)) folds into the ATP-grasp domain. Arginine 192 serves as a coordination point for substrate. ATP is bound at residue asparagine 202. Residue 203-204 (IA) participates in substrate binding. Mg(2+) is bound by residues aspartate 237, glutamate 250, and asparagine 252. 256–260 (EFKGF) provides a ligand contact to substrate. The GF motif that is essential for ArgX substrate specificity signature appears at 259–260 (GF).

This sequence belongs to the RimK family. LysX subfamily. In terms of assembly, homotetramer. Interacts with LysW. The cofactor is Mg(2+).

It carries out the reaction [amino-group carrier protein]-C-terminal-L-glutamate + L-glutamate + ATP = [amino-group carrier protein]-C-terminal-gamma-(L-glutamyl)-L-glutamate + ADP + phosphate + H(+). It participates in amino-acid biosynthesis; L-arginine biosynthesis. Its function is as follows. Catalyzes the ATP-dependent formation of a covalent bond between the amino group of glutamate and the gamma-carboxyl group of the C-terminal glutamate residue in LysW. This Sulfolobus acidocaldarius (strain ATCC 33909 / DSM 639 / JCM 8929 / NBRC 15157 / NCIMB 11770) protein is Glutamate--LysW ligase ArgX.